The chain runs to 385 residues: Alkanesulfonate monooxygenase (385 aa).

It belongs to the SsuD family.

It carries out the reaction an alkanesulfonate + FMNH2 + O2 = an aldehyde + FMN + sulfite + H2O + 2 H(+). Its function is as follows. Catalyzes the desulfonation of aliphatic sulfonates. This Paraburkholderia phymatum (strain DSM 17167 / CIP 108236 / LMG 21445 / STM815) (Burkholderia phymatum) protein is Alkanesulfonate monooxygenase.